The chain runs to 464 residues: D-2-hydroxyglutarate dehydrogenase (464 aa).

The FAD-binding PCMH-type domain maps to 37–216 (FAPAPSAIVF…VEATMRLERQ (180 aa)). (R)-2-hydroxyglutarate-binding residues include R325, S329, and K339. The (R)-malate site is built by R325, S329, and K339. 2 residues coordinate Zn(2+): H374 and H381. N383 is a (R)-2-hydroxyglutarate binding site. E420 contacts Zn(2+). Position 421 (H421) interacts with (R)-2-hydroxyglutarate. Position 421 (H421) interacts with (R)-malate.

The protein belongs to the FAD-binding oxidoreductase/transferase type 4 family. In terms of assembly, homodimer. The cofactor is FAD.

The enzyme catalyses (R)-2-hydroxyglutarate + A = 2-oxoglutarate + AH2. The catalysed reaction is (R)-malate + A = oxaloacetate + AH2. Activated by Zn(2+) ions at low concentrations (10 uM) and inhibited by Zn(2+), Fe(2+) and Ni(2+) at high concentrations (10 mM). In terms of biological role, catalyzes the dehydrogenation of (R)-2-hydroxyglutarate (D-2-hydroxyglutarate or D-2-HG) to 2-oxoglutarate and of (R)-malate (D-malate) to oxaloacetate. Is functionally tied to L-serine biosynthesis, via its coupling with the D-3-phosphoglycerate dehydrogenase SerA, encoded by the adjacent gene in the locus. Is required for the utilization of D-2-hydroxyglutarate as well as D-malate as the sole carbon source for growth of P.stutzeri. Active in vitro with artificial electron acceptors such as 2,6-dichlorophenolindophenol (DCPIP) and appears to couple with electron transfer flavoprotein (ETF) for efficient oxidation of both D-2-hydroxyglutarate and D-malate in vivo. Cannot catalyze the oxidation of L-2-hydroxyglutarate, D-lactate, D-tartrate, D-2-hydroxybutanoate, D-mandelate, D-glycerate and D-phenyllactate. The sequence is that of D-2-hydroxyglutarate dehydrogenase from Stutzerimonas stutzeri (strain A1501) (Pseudomonas stutzeri).